The following is a 148-amino-acid chain: WGDSSSSASACWSCFSLVSGIGADQECPPGWSSHEGHCYKVFSEYKTWVDAEQYCTEQENGGHLVSFHNREEVDFVVKLGYTILKADIVWIGLRDFWRECHWEWSNGAQLDYKGWSDEPNCFIVYTVGNKWLHRKCSSTQQFVCKSPA.

Positions 1–23 (WGDSSSSASACWSCFSLVSGIGA) are cleaved as a signal peptide. Intrachain disulfides connect C27–C38, C55–C144, and C121–C136. The C-type lectin domain maps to 34-145 (HEGHCYKVFS…CSSTQQFVCK (112 aa)).

It belongs to the snaclec family. Heterodimer; disulfide-linked. As to expression, expressed by the venom gland.

The protein localises to the secreted. Its function is as follows. Interferes with one step of hemostasis (modulation of platelet aggregation, or coagulation cascade, for example). This Echis ocellatus (Ocellated saw-scaled viper) protein is Snaclec 27.